Here is a 636-residue protein sequence, read N- to C-terminus: Chaperone protein DnaK (636 aa).

Position 198 is a phosphothreonine; by autocatalysis (Thr198). The tract at residues 600–636 (IAQQQAQAQQGSAEAGAQSQEDDVVDAEFEEVKDDKK) is disordered. The segment covering 601 to 618 (AQQQAQAQQGSAEAGAQS) has biased composition (low complexity). The span at 619–636 (QEDDVVDAEFEEVKDDKK) shows a compositional bias: acidic residues.

The protein belongs to the heat shock protein 70 family.

Functionally, acts as a chaperone. In Vibrio vulnificus (strain CMCP6), this protein is Chaperone protein DnaK.